Here is a 308-residue protein sequence, read N- to C-terminus: Cilia- and flagella-associated protein 73 (308 aa).

2 coiled-coil regions span residues 34-143 and 175-233; these read RLLE…LEPC and AALR…WESK.

The protein belongs to the CFAP73 family.

It localises to the cytoplasm. It is found in the cytoskeleton. The protein resides in the cilium axoneme. Its function is as follows. May play a role in ciliary/flagellar motility by regulating the assembly and the activity of axonemal inner dynein arm. This chain is Cilia- and flagella-associated protein 73, found in Homo sapiens (Human).